The primary structure comprises 143 residues: S-adenosylmethionine decarboxylase proenzyme (143 aa).

Catalysis depends on Ser-66, which acts as the Schiff-base intermediate with substrate; via pyruvic acid. Ser-66 carries the pyruvic acid (Ser); by autocatalysis modification. The Proton acceptor; for processing activity role is filled by His-71. Cys-86 acts as the Proton donor; for catalytic activity in catalysis.

Belongs to the prokaryotic AdoMetDC family. Type 1 subfamily. As to quaternary structure, heterotetramer of two alpha and two beta chains arranged as a dimer of alpha/beta heterodimers. The cofactor is pyruvate. Is synthesized initially as an inactive proenzyme. Formation of the active enzyme involves a self-maturation process in which the active site pyruvoyl group is generated from an internal serine residue via an autocatalytic post-translational modification. Two non-identical subunits are generated from the proenzyme in this reaction, and the pyruvate is formed at the N-terminus of the alpha chain, which is derived from the carboxyl end of the proenzyme. The post-translation cleavage follows an unusual pathway, termed non-hydrolytic serinolysis, in which the side chain hydroxyl group of the serine supplies its oxygen atom to form the C-terminus of the beta chain, while the remainder of the serine residue undergoes an oxidative deamination to produce ammonia and the pyruvoyl group blocking the N-terminus of the alpha chain.

The catalysed reaction is S-adenosyl-L-methionine + H(+) = S-adenosyl 3-(methylsulfanyl)propylamine + CO2. It participates in amine and polyamine biosynthesis; S-adenosylmethioninamine biosynthesis; S-adenosylmethioninamine from S-adenosyl-L-methionine: step 1/1. Catalyzes the decarboxylation of S-adenosylmethionine to S-adenosylmethioninamine (dcAdoMet), the propylamine donor required for the synthesis of the polyamines spermine and spermidine from the diamine putrescine. The chain is S-adenosylmethionine decarboxylase proenzyme from Thermococcus kodakarensis (strain ATCC BAA-918 / JCM 12380 / KOD1) (Pyrococcus kodakaraensis (strain KOD1)).